The sequence spans 588 residues: MRHRQDNLLANRTLLPGMASGQYVFRLCTFSPVVRYFSLLPCLCILSFSSPAAMLSPGDRSAIQQQQQQLLDENQRQRDALERSAPLTITPSPETSAGTEGPCFTVSSIVVSGATRLTSAETDRLVAPWVNQCLNITGLTAVTDAMTDSYIRRGYITSRAFLTEQDLSGGVLHITVMEGRLQQIRAEGADLPARTLKMVFPGMEGKVLNLRDIEQGMEQINRLRTEPVQIEISPGDREGWSVVTLTALPEWPVTGSVGIDNSGQKSTGTGQLNGVLSFNNPLGLADNWFVSGGRSSDFSVSHDARNFAAGVSLPYGYTLVDYTYSWSDYLSTIDNRGWRWRSTGDLQTHRLGLSHVLFRNGDMKTALTGGLQHRIIHNYLDDVLLQGSSRKLTSFSVGLNHTHKFLGGVGTLNPVFTRGMPWFGAESDHGKRGDLPVNQFRKWSVSASFQRPVTDRVWWLTSAYAQWSPDRLHGVEQLSLGGESSVRGFKDQYISGNNGGYLRNELSWSLFSLPYVGTVRAVAALDGGWLHSDSDDPYSSGTLWGAAAGLSTTSGHVSGSFTAGLPLVYPDWLAPDHLTVYWRVAVAF.

The 76-residue stretch at 104 to 179 (FTVSSIVVSG…GVLHITVMEG (76 aa)) folds into the POTRA domain.

The protein belongs to the TPS (TC 1.B.20) family.

It localises to the cell outer membrane. Potential outer membrane protein component of a toxin-immunity protein module, which functions as a cellular contact-dependent growth inhibition (CDI) system. CDI modules allow bacteria to communicate with and inhibit the growth of closely related neighboring bacteria in a contact-dependent fashion. This protein may be required for secretion and assembly of the CdiA toxin protein. Inhibitory cells must be in logarithmic (not stationary) phase to inhibit growth of their targets, while the presence of P or S but not type 1 pili protects the target cells against growth inhibition. In terms of biological role, probable member of a two partner secretion pathway (TPS) in which it mediates the secretion of CdiA. The chain is Outer membrane transporter CdiB from Escherichia coli.